A 380-amino-acid chain; its full sequence is Dynactin subunit 2 (380 aa).

Positions 1 to 32 (MADPKFQNLPGIAYDQPDVYETPDDPELDTSD) are disordered. Positions 21–32 (ETPDDPELDTSD) are enriched in acidic residues. Phosphoserine occurs at positions 49, 58, and 86. 2 coiled-coil regions span residues 100-135 (VQKCQRLQIEMNELLNEVAALQVDRKVADEEKQSYD) and 353-377 (ETFAQNLETINSKVAKVEQRVAAIS).

Belongs to the dynactin subunit 2 family. Subunit of dynactin, a multiprotein complex associated with dynein.

The protein localises to the cytoplasm. The protein resides in the cytoskeleton. It localises to the membrane. Its function is as follows. Modulates cytoplasmic dynein binding to an organelle, and plays a role in prometaphase chromosome alignment and spindle organization during mitosis. May play a role in synapse formation during brain development. The polypeptide is Dynactin subunit 2 (Drosophila melanogaster (Fruit fly)).